Reading from the N-terminus, the 252-residue chain is tRNA (guanine-N(7)-)-methyltransferase (252 aa).

Residues glutamate 75, glutamate 100, aspartate 127, and aspartate 150 each contribute to the S-adenosyl-L-methionine site. Aspartate 150 is a catalytic residue. Lysine 154 contributes to the substrate binding site. An interaction with RNA region spans residues arginine 156–arginine 161. Residues aspartate 186 and threonine 223 to glutamate 226 each bind substrate.

Belongs to the class I-like SAM-binding methyltransferase superfamily. TrmB family.

The enzyme catalyses guanosine(46) in tRNA + S-adenosyl-L-methionine = N(7)-methylguanosine(46) in tRNA + S-adenosyl-L-homocysteine. It functions in the pathway tRNA modification; N(7)-methylguanine-tRNA biosynthesis. In terms of biological role, catalyzes the formation of N(7)-methylguanine at position 46 (m7G46) in tRNA. This is tRNA (guanine-N(7)-)-methyltransferase from Xanthomonas oryzae pv. oryzae (strain MAFF 311018).